The primary structure comprises 301 residues: Probable 5-dehydro-4-deoxyglucarate dehydratase (301 aa).

The protein belongs to the DapA family.

It carries out the reaction 5-dehydro-4-deoxy-D-glucarate + H(+) = 2,5-dioxopentanoate + CO2 + H2O. Its pathway is carbohydrate acid metabolism; D-glucarate degradation; 2,5-dioxopentanoate from D-glucarate: step 2/2. In Xanthobacter autotrophicus (strain ATCC BAA-1158 / Py2), this protein is Probable 5-dehydro-4-deoxyglucarate dehydratase.